We begin with the raw amino-acid sequence, 358 residues long: Bi-functional coumaroyl CoA and feruloyl CoA ortho-hydroxylase F6H2-2-1 (358 aa).

Positions 200–308 (SKESLLMGSR…RISVPVFVNP (109 aa)) constitute a Fe2OG dioxygenase domain. Tyr216 contributes to the 2-oxoglutarate binding site. Residues His231, Asp233, and His289 each coordinate Fe cation. Arg299 and Ser301 together coordinate 2-oxoglutarate.

Belongs to the iron/ascorbate-dependent oxidoreductase family. L-ascorbate serves as cofactor. Fe(2+) is required as a cofactor. As to expression, mostly expressed in underground stems and stems.

It carries out the reaction (E)-4-coumaroyl-CoA + 2-oxoglutarate + O2 = (E)-2,4-dihydroxycinnamoyl-CoA + succinate + CO2. It catalyses the reaction (E)-feruloyl-CoA + 2-oxoglutarate + O2 = (E)-6-hydroxyferuloyl-CoA + succinate + CO2. Its pathway is phenylpropanoid metabolism. Functionally, 2-oxoglutarate (OG)- and Fe(II)-dependent dioxygenase (2OGD) involved in scopoletin and umbelliferone biosynthesis. Converts feruloyl CoA into 6'-hydroxyferuloyl CoA, and p-coumaroyl CoA into 2,4-dihydroxycinnamoyl-CoA, but has no activity toward caffeoyl-CoA. In Ipomoea batatas (Sweet potato), this protein is Bi-functional coumaroyl CoA and feruloyl CoA ortho-hydroxylase F6H2-2-1.